We begin with the raw amino-acid sequence, 1286 residues long: Ankyrin-repeat and fibronectin type III domain-containing 1 (1286 aa).

ANK repeat units lie at residues Gln274 to Leu303 and Glu311 to Pro340. One can recognise a Fibronectin type-III domain in the interval Val411–Ser507. The interval Gly748–Lys755 is highly conserved peptide sequence. A compositionally biased stretch (polar residues) spans Ser999–Ser1011. 4 disordered regions span residues Ser999 to Cys1032, Lys1086 to His1106, Ala1187 to Pro1207, and Ala1242 to Leu1286. The segment covering Ser1260 to Pro1277 has biased composition (low complexity).

In terms of tissue distribution, expressed in both the suprachiasmatic nucleus and dorsal medial hypothalamus.

Its function is as follows. May play a role in neuronal function. The protein is Ankyrin-repeat and fibronectin type III domain-containing 1 of Mus musculus (Mouse).